Consider the following 273-residue polypeptide: Proteasome subunit beta type-10 (273 aa).

An N-acetylmethionine modification is found at M1. A propeptide spans 1 to 39 (removed in mature form); sequence MLKPALEPRGGFSFENCQRNASLERVLPGLKVPHARKTG. Residue T40 is the Nucleophile of the active site. At S230 the chain carries Phosphoserine.

This sequence belongs to the peptidase T1B family. The 26S proteasome consists of a 20S proteasome core and two 19S regulatory subunits. The 20S proteasome core is composed of 28 subunits that are arranged in four stacked rings, resulting in a barrel-shaped structure. The two end rings are each formed by seven alpha subunits, and the two central rings are each formed by seven beta subunits. The catalytic chamber with the active sites is on the inside of the barrel. Component of the immunoproteasome, where it displaces the equivalent housekeeping subunit PSMB7. Component of the spermatoproteasome, a form of the proteasome specifically found in testis. As to quaternary structure, (Microbial infection) Interacts with HIV-1 TAT protein. In terms of processing, autocleaved. The resulting N-terminal Thr residue of the mature subunit is responsible for the nucleophile proteolytic activity.

Its subcellular location is the cytoplasm. The protein resides in the nucleus. It carries out the reaction Cleavage of peptide bonds with very broad specificity.. Functionally, the proteasome is a multicatalytic proteinase complex which is characterized by its ability to cleave peptides with Arg, Phe, Tyr, Leu, and Glu adjacent to the leaving group at neutral or slightly basic pH. The proteasome has an ATP-dependent proteolytic activity. This subunit is involved in antigen processing to generate class I binding peptides. This is Proteasome subunit beta type-10 (PSMB10) from Homo sapiens (Human).